A 276-amino-acid chain; its full sequence is MAMIFLLAALSTTHLASSLRPVAAGACRPSGYLPGKSGNCEKSNDPDCCEDGKAYPQYRFEKGKDGGGPSECDNAYHSDGELVVALSTGWFAGTARCGHRVRITASGGGGRSVVAKVVDECDSVHGCDGEHNYEAPCGNNIVDASPAVWDALGLDKNVGMEHITWGREPQGKIPVQGFSMHQLNPSQSPGKRFLVGEISLPPFGSSSREWEMVSWKCFLPAFMSINYLHGSSHLRTKLNIKGEWQLDRYPFTTLQQHILSRKFVMLWCIQVKKNVL.

The signal sequence occupies residues 1 to 18; the sequence is MAMIFLLAALSTTHLASS.

This sequence belongs to the kiwellin family.

The protein localises to the secreted. The sequence is that of Putative ripening-related protein 5 from Oryza sativa subsp. japonica (Rice).